Here is a 67-residue protein sequence, read N- to C-terminus: Large ribosomal subunit protein bL35 (67 aa).

The disordered stretch occupies residues 22–52 (VLAGPGKKRHNLSARSQKAKRQNRGSQVLTH). The segment covering 27–44 (GKKRHNLSARSQKAKRQN) has biased composition (basic residues).

It belongs to the bacterial ribosomal protein bL35 family.

In Granulibacter bethesdensis (strain ATCC BAA-1260 / CGDNIH1), this protein is Large ribosomal subunit protein bL35.